Reading from the N-terminus, the 122-residue chain is uncharacterized protein (122 aa).

2 helical membrane-spanning segments follow: residues 36 to 56 (SVRS…YSQF) and 72 to 92 (AVFL…FSTD).

Its subcellular location is the membrane. This is an uncharacterized protein from Saccharomyces cerevisiae (strain ATCC 204508 / S288c) (Baker's yeast).